Reading from the N-terminus, the 318-residue chain is Ribonuclease Z (318 aa).

Zn(2+) contacts are provided by histidine 63, histidine 65, aspartate 67, histidine 68, histidine 142, aspartate 213, and histidine 273. Aspartate 67 acts as the Proton acceptor in catalysis.

The protein belongs to the RNase Z family. As to quaternary structure, homodimer. Requires Zn(2+) as cofactor.

The catalysed reaction is Endonucleolytic cleavage of RNA, removing extra 3' nucleotides from tRNA precursor, generating 3' termini of tRNAs. A 3'-hydroxy group is left at the tRNA terminus and a 5'-phosphoryl group is left at the trailer molecule.. In terms of biological role, zinc phosphodiesterase, which displays some tRNA 3'-processing endonuclease activity. Probably involved in tRNA maturation, by removing a 3'-trailer from precursor tRNA. The protein is Ribonuclease Z of Leuconostoc mesenteroides subsp. mesenteroides (strain ATCC 8293 / DSM 20343 / BCRC 11652 / CCM 1803 / JCM 6124 / NCDO 523 / NBRC 100496 / NCIMB 8023 / NCTC 12954 / NRRL B-1118 / 37Y).